An 805-amino-acid polypeptide reads, in one-letter code: Acetyl-CoA decarbonylase/synthase complex subunit alpha 2 (805 aa).

Residues cysteine 72, cysteine 75, cysteine 76, cysteine 78, cysteine 83, and cysteine 93 each coordinate [4Fe-4S] cluster. CO is bound at residue histidine 116. Residues histidine 249, cysteine 277, and cysteine 322 each coordinate [Ni-4Fe-4S] cluster. 4Fe-4S ferredoxin-type domains lie at 407 to 435 (EEFKVYIDKCVKCGECMLACPEELDIPEA) and 445 to 474 (EYLEALHDVCIGCRRCEQVCKKEIPILNVL). [4Fe-4S] cluster is bound by residues cysteine 416, cysteine 419, cysteine 422, cysteine 426, cysteine 454, cysteine 457, cysteine 460, and cysteine 464. The [Ni-4Fe-4S] cluster site is built by cysteine 522, cysteine 551, and cysteine 586.

It belongs to the Ni-containing carbon monoxide dehydrogenase family. Heterotetramer of two alpha and two epsilon subunits. The ACDS complex is made up of alpha, epsilon, beta, gamma and delta subunits with a probable stoichiometry of (alpha(2)epsilon(2))(4)-beta(8)-(gamma(1)delta(1))(8). Requires [4Fe-4S] cluster as cofactor. The cofactor is [Ni-4Fe-4S] cluster.

The enzyme catalyses CO + 2 oxidized [2Fe-2S]-[ferredoxin] + H2O = 2 reduced [2Fe-2S]-[ferredoxin] + CO2 + 2 H(+). It functions in the pathway one-carbon metabolism; methanogenesis from acetate. Its function is as follows. Part of the ACDS complex that catalyzes the reversible cleavage of acetyl-CoA, allowing growth on acetate as sole source of carbon and energy. The alpha-epsilon subcomponent functions as a carbon monoxide dehydrogenase. In Methanosarcina acetivorans (strain ATCC 35395 / DSM 2834 / JCM 12185 / C2A), this protein is Acetyl-CoA decarbonylase/synthase complex subunit alpha 2.